The following is a 159-amino-acid chain: Transcriptional repressor NrdR (159 aa).

The span at 1–11 (MQCPTCQNTDS) shows a compositional bias: polar residues. The interval 1–21 (MQCPTCQNTDSRVLESRSADS) is disordered. The segment at 3–34 (CPTCQNTDSRVLESRSADSGKSVRRRRECLNC) is a zinc-finger region. The ATP-cone domain maps to 49–139 (VSVLKKDGSR…VYRKFNGVKD (91 aa)).

It belongs to the NrdR family. Requires Zn(2+) as cofactor.

In terms of biological role, negatively regulates transcription of bacterial ribonucleotide reductase nrd genes and operons by binding to NrdR-boxes. The polypeptide is Transcriptional repressor NrdR (Prochlorococcus marinus (strain MIT 9301)).